The following is a 134-amino-acid chain: Ribosome-binding factor A (134 aa).

The protein belongs to the RbfA family. As to quaternary structure, monomer. Binds 30S ribosomal subunits, but not 50S ribosomal subunits or 70S ribosomes.

Its subcellular location is the cytoplasm. In terms of biological role, one of several proteins that assist in the late maturation steps of the functional core of the 30S ribosomal subunit. Associates with free 30S ribosomal subunits (but not with 30S subunits that are part of 70S ribosomes or polysomes). Required for efficient processing of 16S rRNA. May interact with the 5'-terminal helix region of 16S rRNA. The sequence is that of Ribosome-binding factor A from Psychrobacter arcticus (strain DSM 17307 / VKM B-2377 / 273-4).